The sequence spans 234 residues: uncharacterized protein (234 aa).

Positions 5–234 (MELVDVWKIY…ERRGVVYGDT (230 aa)) constitute an ABC transporter domain. ATP is bound at residue 41–48 (GPSGSGKS).

It belongs to the ABC transporter superfamily.

This is an uncharacterized protein from Thermotoga maritima (strain ATCC 43589 / DSM 3109 / JCM 10099 / NBRC 100826 / MSB8).